Reading from the N-terminus, the 81-residue chain is ATP synthase subunit c (81 aa).

The next 2 helical transmembrane spans lie at 6–26 and 57–77; these read AAASVIAAALAVGLAAIGPGI and LAFMEALTIYGLVVALVLLFA.

This sequence belongs to the ATPase C chain family. As to quaternary structure, F-type ATPases have 2 components, F(1) - the catalytic core - and F(0) - the membrane proton channel. F(1) has five subunits: alpha(3), beta(3), gamma(1), delta(1), epsilon(1). F(0) has four main subunits: a(1), b(1), b'(1) and c(10-14). The alpha and beta chains form an alternating ring which encloses part of the gamma chain. F(1) is attached to F(0) by a central stalk formed by the gamma and epsilon chains, while a peripheral stalk is formed by the delta, b and b' chains.

It localises to the cellular thylakoid membrane. F(1)F(0) ATP synthase produces ATP from ADP in the presence of a proton or sodium gradient. F-type ATPases consist of two structural domains, F(1) containing the extramembraneous catalytic core and F(0) containing the membrane proton channel, linked together by a central stalk and a peripheral stalk. During catalysis, ATP synthesis in the catalytic domain of F(1) is coupled via a rotary mechanism of the central stalk subunits to proton translocation. Functionally, key component of the F(0) channel; it plays a direct role in translocation across the membrane. A homomeric c-ring of between 10-14 subunits forms the central stalk rotor element with the F(1) delta and epsilon subunits. The polypeptide is ATP synthase subunit c (Picosynechococcus sp. (strain ATCC 27264 / PCC 7002 / PR-6) (Agmenellum quadruplicatum)).